A 386-amino-acid chain; its full sequence is ATP phosphoribosyltransferase regulatory subunit (386 aa).

It belongs to the class-II aminoacyl-tRNA synthetase family. HisZ subfamily. In terms of assembly, heteromultimer composed of HisG and HisZ subunits.

The protein resides in the cytoplasm. Its pathway is amino-acid biosynthesis; L-histidine biosynthesis; L-histidine from 5-phospho-alpha-D-ribose 1-diphosphate: step 1/9. Its function is as follows. Required for the first step of histidine biosynthesis. May allow the feedback regulation of ATP phosphoribosyltransferase activity by histidine. This chain is ATP phosphoribosyltransferase regulatory subunit, found in Rhodospirillum centenum (strain ATCC 51521 / SW).